The primary structure comprises 107 residues: uncharacterized protein (107 aa).

This is an uncharacterized protein from Acanthamoeba polyphaga mimivirus (APMV).